Here is a 460-residue protein sequence, read N- to C-terminus: Argininosuccinate lyase (460 aa).

It belongs to the lyase 1 family. Argininosuccinate lyase subfamily.

It localises to the cytoplasm. The catalysed reaction is 2-(N(omega)-L-arginino)succinate = fumarate + L-arginine. The protein operates within amino-acid biosynthesis; L-arginine biosynthesis; L-arginine from L-ornithine and carbamoyl phosphate: step 3/3. The protein is Argininosuccinate lyase of Streptococcus sanguinis (strain SK36).